Reading from the N-terminus, the 252-residue chain is uncharacterized protein (252 aa).

NADP(+) is bound at residue 9 to 33 (LITGGSAGIGLELAKRLLELGNEVI). Serine 139 provides a ligand contact to substrate. Tyrosine 152 serves as the catalytic Proton acceptor.

This sequence belongs to the short-chain dehydrogenases/reductases (SDR) family.

Its subcellular location is the cytoplasm. This is an uncharacterized protein from Bacillus subtilis (strain 168).